The sequence spans 358 residues: Protein-glutamate methylesterase/protein-glutamine glutaminase 2 (358 aa).

The region spanning 8–125 (RVLIVDDSAV…ARGLEGYAEE (118 aa)) is the Response regulatory domain. Asp-59 is modified (4-aspartylphosphate). Positions 157 to 352 (PMPGSALRFR…LDRVAERLLA (196 aa)) constitute a CheB-type methylesterase domain. Active-site residues include Ser-177, His-203, and Asp-299.

Belongs to the CheB family. In terms of processing, phosphorylated by CheA. Phosphorylation of the N-terminal regulatory domain activates the methylesterase activity.

It is found in the cytoplasm. It carries out the reaction [protein]-L-glutamate 5-O-methyl ester + H2O = L-glutamyl-[protein] + methanol + H(+). The enzyme catalyses L-glutaminyl-[protein] + H2O = L-glutamyl-[protein] + NH4(+). In terms of biological role, involved in chemotaxis. Part of a chemotaxis signal transduction system that modulates chemotaxis in response to various stimuli. Catalyzes the demethylation of specific methylglutamate residues introduced into the chemoreceptors (methyl-accepting chemotaxis proteins or MCP) by CheR. Also mediates the irreversible deamidation of specific glutamine residues to glutamic acid. This Xanthomonas oryzae pv. oryzae (strain MAFF 311018) protein is Protein-glutamate methylesterase/protein-glutamine glutaminase 2.